Reading from the N-terminus, the 957-residue chain is UvrABC system protein A (957 aa).

G33–S40 provides a ligand contact to ATP. A C4-type zinc finger spans residues C252–C279. ABC transporter domains follow at residues W309 to L587 and P607 to K935. An ATP-binding site is contributed by G639–S646. Residues C738 to C764 form a C4-type zinc finger.

Belongs to the ABC transporter superfamily. UvrA family. As to quaternary structure, forms a heterotetramer with UvrB during the search for lesions.

It is found in the cytoplasm. The UvrABC repair system catalyzes the recognition and processing of DNA lesions. UvrA is an ATPase and a DNA-binding protein. A damage recognition complex composed of 2 UvrA and 2 UvrB subunits scans DNA for abnormalities. When the presence of a lesion has been verified by UvrB, the UvrA molecules dissociate. The sequence is that of UvrABC system protein A from Bacillus subtilis (strain 168).